The following is a 464-amino-acid chain: Protein FAM90A14 (464 aa).

Disordered stretches follow at residues 1-42, 70-389, and 411-437; these read MMAR…DPRL, PATL…HDGA, and APSF…SEAP. 2 stretches are compositionally biased toward basic and acidic residues: residues 74–89 and 97–114; these read GKKE…KPRV and NKDK…DPQR. Residues 180–197 are compositionally biased toward low complexity; sequence LASLSPLRKASLSSSSSL.

The protein belongs to the FAM90 family.

This Homo sapiens (Human) protein is Protein FAM90A14.